The sequence spans 259 residues: uncharacterized protein (259 aa).

It to M.thermoautotrophicum MTH738.

This is an uncharacterized protein from Methanocaldococcus jannaschii (strain ATCC 43067 / DSM 2661 / JAL-1 / JCM 10045 / NBRC 100440) (Methanococcus jannaschii).